The chain runs to 294 residues: Non-selective voltage-gated ion channel VDAC2 (294 aa).

The residue at position 2 (Ala2) is an N-acetylalanine. Lys23 and Lys31 together coordinate ATP. Lys31 is modified (N6-acetyllysine; alternate). N6-succinyllysine; alternate is present on Lys31. A Glycyl lysine isopeptide (Lys-Gly) (interchain with G-Cter in ubiquitin); alternate cross-link involves residue Lys31. A run of 2 beta stranded transmembrane segments spans residues 37 to 46 and 50 to 58; these read LVKLDVKTKS and VEFSTSGSS. Lys64 participates in a covalent cross-link: Glycyl lysine isopeptide (Lys-Gly) (interchain with G-Cter in ubiquitin). A beta stranded membrane pass occupies residues 65–75; the sequence is VTGTLETKYKW. The residue at position 78 (Tyr78) is a Phosphotyrosine. Transmembrane regions (beta stranded) follow at residues 80–87, 91–100, and 106–115; these read LTFTEKWN, TLGTEIAIED, and LKLTFDTTFS. Thr118 bears the Phosphothreonine mark. An N6-acetyllysine; alternate modification is found at Lys120. A Glycyl lysine isopeptide (Lys-Gly) (interchain with G-Cter in ubiquitin); alternate cross-link involves residue Lys120. Residue Lys121 forms a Glycyl lysine isopeptide (Lys-Gly) (interchain with G-Cter in ubiquitin) linkage. 4 beta stranded membrane-spanning segments follow: residues 122–131, 134–141, 148–156, and 161–169; these read SGKIKSSYKR, INLGCDVD, AIHGSAVFG, and LAGYQMTFD. Lys172 participates in a covalent cross-link: Glycyl lysine isopeptide (Lys-Gly) (interchain with G-Cter in ubiquitin). A run of 6 beta stranded transmembrane segments spans residues 174–186, 189–196, 200–209, 213–222, 229–238, and 242–249; these read KLTR…GYRT, FQLHTNVN, EFGGSIYQKV, LDTSVNLAWT, RFGIAAKYQL, and ASISAKVN. Ser251 carries the post-translational modification Phosphoserine. NAD(+) contacts are provided by residues 253-255 and 271-275; these read LIG and SALVD. 2 consecutive transmembrane segments (beta stranded) span residues 253-262 and 265-274; these read LIGVGYTQTL and GVKLTLSALV. At Lys277 the chain carries N6-acetyllysine; alternate. Lys277 participates in a covalent cross-link: Glycyl lysine isopeptide (Lys-Gly) (interchain with G-Cter in ubiquitin); alternate. A beta stranded membrane pass occupies residues 284–293; sequence HKLGLALELE.

Belongs to the eukaryotic mitochondrial porin family. Monomer, homodimer and higher order oligomers; formation of higher order structures is necessary for scramblase activity. Interacts with ARMC12 in a TBC1D21-dependent manner. Interacts with KLC3. Interacts with SPATA33. Interacts with PPP3CC in a SPATA33-dependent manner. In terms of processing, ubiquitinated by PRKN during mitophagy, leading to its degradation and enhancement of mitophagy. Deubiquitinated by USP30.

Its subcellular location is the mitochondrion outer membrane. It localises to the membrane. The enzyme catalyses chloride(in) = chloride(out). It carries out the reaction K(+)(in) = K(+)(out). It catalyses the reaction a 1,2-diacyl-sn-glycero-3-phospho-L-serine(in) = a 1,2-diacyl-sn-glycero-3-phospho-L-serine(out). The catalysed reaction is a 1,2-diacyl-sn-glycero-3-phosphocholine(in) = a 1,2-diacyl-sn-glycero-3-phosphocholine(out). The enzyme catalyses a 1,2-diacyl-sn-glycero-3-phospho-(1D-myo-inositol)(in) = a 1,2-diacyl-sn-glycero-3-phospho-(1D-myo-inositol)(out). Non-selective voltage-gated ion channel that mediates the transport of anions and cations through the mitochondrion outer membrane and plasma membrane. The channel adopts an open conformation at zero mV and a closed conformation at both positive and negative potentials. There are two populations of channels; the main that functions in a lower open-state conductance with lower ion selectivity, that switch, in a voltage-dependent manner, from the open to a low-conducting 'closed' state and the other that has a normal ion selectivity in the typical high conductance, 'open' state. Binds various lipids, including the sphingolipid ceramide, the phospholipid phosphatidylcholine, and the sterols cholesterol and oxysterol. Binding of ceramide promotes the mitochondrial outer membrane permeabilization (MOMP) apoptotic pathway. In terms of biological role, catalyzes the scrambling of phospholipids across the outer mitochondrial membrane; the mechanism is unrelated to channel activity and is capable of translocating both anionic and zwitterionic phospholipids. In Oryctolagus cuniculus (Rabbit), this protein is Non-selective voltage-gated ion channel VDAC2.